The primary structure comprises 86 residues: Large ribosomal subunit protein uL24 (86 aa).

Belongs to the universal ribosomal protein uL24 family. In terms of assembly, part of the 50S ribosomal subunit.

Its function is as follows. One of two assembly initiator proteins, it binds directly to the 5'-end of the 23S rRNA, where it nucleates assembly of the 50S subunit. Functionally, one of the proteins that surrounds the polypeptide exit tunnel on the outside of the subunit. In Bdellovibrio bacteriovorus (strain ATCC 15356 / DSM 50701 / NCIMB 9529 / HD100), this protein is Large ribosomal subunit protein uL24.